The chain runs to 185 residues: Ribosome-recycling factor (185 aa).

This sequence belongs to the RRF family.

The protein localises to the cytoplasm. Its function is as follows. Responsible for the release of ribosomes from messenger RNA at the termination of protein biosynthesis. May increase the efficiency of translation by recycling ribosomes from one round of translation to another. In Thermotoga petrophila (strain ATCC BAA-488 / DSM 13995 / JCM 10881 / RKU-1), this protein is Ribosome-recycling factor.